Reading from the N-terminus, the 330-residue chain is Trans-1,2-dihydrobenzene-1,2-diol dehydrogenase (330 aa).

The protein belongs to the Gfo/Idh/MocA family. As to quaternary structure, homodimer.

The catalysed reaction is (1R,2R)-1,2-dihydrobenzene-1,2-diol + NADP(+) = catechol + NADPH + H(+). The enzyme catalyses D-xylose + NADP(+) = D-xylono-1,5-lactone + NADPH + H(+). This chain is Trans-1,2-dihydrobenzene-1,2-diol dehydrogenase (dhdh), found in Xenopus tropicalis (Western clawed frog).